We begin with the raw amino-acid sequence, 159 residues long: RNA pyrophosphohydrolase (159 aa).

One can recognise a Nudix hydrolase domain in the interval 6 to 149; the sequence is GFRPNVGIIL…KREVYRRALK (144 aa). The Nudix box motif lies at 38-59; it reads GGINARETPEEALFRELNEEVG.

It belongs to the Nudix hydrolase family. RppH subfamily. It depends on a divalent metal cation as a cofactor.

Accelerates the degradation of transcripts by removing pyrophosphate from the 5'-end of triphosphorylated RNA, leading to a more labile monophosphorylated state that can stimulate subsequent ribonuclease cleavage. The protein is RNA pyrophosphohydrolase of Stutzerimonas stutzeri (strain A1501) (Pseudomonas stutzeri).